A 454-amino-acid chain; its full sequence is Mogroside I-E synthase (454 aa).

His-18 functions as the Proton acceptor in the catalytic mechanism. His-18 contributes to the an anthocyanidin binding site. Asp-111 (charge relay) is an active-site residue. An anthocyanidin is bound at residue His-144. A disulfide bond links Cys-259 and Cys-331. Residues Ser-278, Cys-331, Gln-333, Trp-351, Asn-352, Ser-353, and Glu-356 each coordinate UDP-alpha-D-glucose. An an anthocyanidin-binding site is contributed by Ala-371. UDP-alpha-D-glucose is bound by residues Asp-372 and Gln-373.

The protein belongs to the UDP-glycosyltransferase family. As to expression, highly expressed in young fruits 15 days after anthesis (15-DAA).

It carries out the reaction mogrol + UDP-alpha-D-glucose = mogroside IE + UDP + H(+). It functions in the pathway secondary metabolite biosynthesis; terpenoid biosynthesis. With respect to regulation, activity is increased by Mg(2+). In terms of biological role, UDP-glycosyltransferase involved in the biosynthesis of cucurbitacin and mogroside tetracyclic triterpene natural products (e.g. siamenoside I and mogrosides IV, V and VI). Cucurbitacins have cytotoxic properties and exhibit deterrent taste as a defense barrier against herbivores. Mogrosides are nonsugar highly oxygenated compounds used as high-intensity zero-calorie sweeteners; they also possess pharmacological properties such as regulating immunity, lowering blood sugar and lipid levels, protecting the liver, and acting as antioxidants and antitumor agents. Catalyzes the transfer of a glucose moiety to the C-3 hydroxyl of mogrol to form mogroside I-E. Besides mogrol, UGT74AC1 also shows activity in vitro with quercetin and naringenin as substrate. The protein is Mogroside I-E synthase of Siraitia grosvenorii (Monk's fruit).